Consider the following 516-residue polypeptide: 2,3-bisphosphoglycerate-independent phosphoglycerate mutase (516 aa).

Positions 13 and 63 each coordinate Mn(2+). Residue Ser63 is the Phosphoserine intermediate of the active site. Residues His124, 154–155, Arg186, Arg192, 262–265, and Lys337 contribute to the substrate site; these read RD and RPDR. Asp404, His408, Asp445, His446, and His464 together coordinate Mn(2+).

The protein belongs to the BPG-independent phosphoglycerate mutase family. As to quaternary structure, monomer. It depends on Mn(2+) as a cofactor.

It catalyses the reaction (2R)-2-phosphoglycerate = (2R)-3-phosphoglycerate. It participates in carbohydrate degradation; glycolysis; pyruvate from D-glyceraldehyde 3-phosphate: step 3/5. Catalyzes the interconversion of 2-phosphoglycerate and 3-phosphoglycerate. The chain is 2,3-bisphosphoglycerate-independent phosphoglycerate mutase from Cellvibrio japonicus (strain Ueda107) (Pseudomonas fluorescens subsp. cellulosa).